The sequence spans 101 residues: MKNAALCEALPLLATCSHEIPPTPHTVCFVFPPALLLSPSKLTLLNSRRVASRCVIIIDPRLLRLFSCSRPQQLPRDKNQSFAKPSFSFFFFLLTSLLSPF.

Residues 1–17 form the signal peptide; the sequence is MKNAALCEALPLLATCS. Serine 81 carries GPI-anchor amidated serine lipidation. A propeptide spans 82 to 101 (removed in mature form); the sequence is FAKPSFSFFFFLLTSLLSPF.

It localises to the cell membrane. This chain is Long chronological lifespan protein 1 (LCL1), found in Saccharomyces cerevisiae (strain ATCC 204508 / S288c) (Baker's yeast).